The following is a 239-amino-acid chain: Proteasome activator complex subunit 2 (239 aa).

Residue Ala-2 is modified to N-acetylalanine. Ser-10 is subject to Phosphoserine. The segment at 65-87 is disordered; the sequence is DIPIPDPPPKDDEMETDKQEKKE. Residues 72–87 show a composition bias toward basic and acidic residues; the sequence is PPKDDEMETDKQEKKE.

This sequence belongs to the PA28 family. In terms of assembly, heterodimer of PSME1 and PSME2, which forms a hexameric ring.

Its function is as follows. Implicated in immunoproteasome assembly and required for efficient antigen processing. The PA28 activator complex enhances the generation of class I binding peptides by altering the cleavage pattern of the proteasome. The chain is Proteasome activator complex subunit 2 (Psme2) from Mus musculus (Mouse).